The primary structure comprises 105 residues: Cuticle protein AMP1A (105 aa).

The segment at 1–21 (DRDAQTLTDERSDQGDGNFRY) is disordered. Residues 16–81 (DGNFRYEFET…PSSDLLPVGP (66 aa)) enclose the Chitin-binding type R&amp;R domain.

Arthrodial membrane.

In Homarus americanus (American lobster), this protein is Cuticle protein AMP1A.